A 681-amino-acid polypeptide reads, in one-letter code: Rabphilin-3A (681 aa).

The tract at residues 1-21 is disordered; sequence MTDTVVNRWMYPGDGPLQSND. One can recognise a RabBD domain in the interval 40-157; the sequence is QRKQEELTDE…KRSGAWFFKG (118 aa). The FYVE-type zinc-finger motif lies at 88-145; sequence GDGVNRCILCGEQLGMLGSACVVCEDCKKNVCTKCGVETSNNRPHPVWLCKICLEQRE. 8 residues coordinate Zn(2+): Cys-94, Cys-97, Cys-111, Cys-114, Cys-119, Cys-122, Cys-137, and Cys-140. A disordered region spans residues 162–375; the sequence is VLPQPMPIKK…EEEANSYDSD (214 aa). Positions 199–208 are enriched in basic and acidic residues; it reads ARGDMEDRRP. At Arg-223 the chain carries Omega-N-methylarginine. Residues 243–252 are compositionally biased toward basic and acidic residues; sequence RDSEGWDHAH. Ser-271 carries the phosphoserine modification. Pro residues predominate over residues 278 to 296; that stretch reads APAPVPSPAPPQPVQPGPP. The span at 347–356 shows a compositional bias: low complexity; it reads AAPYSQAAPA. The span at 362-375 shows a compositional bias: acidic residues; that stretch reads AEEEEEEANSYDSD. Residues 379 to 501 form the C2 1 domain; it reads TLGALEFSLL…KANQRKNFNI (123 aa). Residues Met-409, Asp-410, Asp-416, Asp-471, Glu-472, Asp-473, Glu-479, Glu-526, Asp-568, Asp-574, Asp-628, Tyr-629, Asp-630, and Asp-636 each coordinate Ca(2+). In terms of domain architecture, C2 2 spans 537-670; it reads ERGKILVSLM…NKDKKIERWH (134 aa). Ser-679 and Ser-680 each carry phosphoserine.

As to quaternary structure, interacts with RAB3B, RAB3C, RAB3D, RAB8A, RAB27A and RAB27B. Interacts with RAB3A; this interaction recruits RPH3A to synaptic vesicules. Interacts (via C2B domain) with SNAP25. Interacts with deubiquitinating enzyme CAND1; this interaction results in the deubiquitination of RPH3A. Interacts with GRIN2A and DLG4; this ternary complex regulates NMDA receptor composition at postsynaptic membranes. Interacts with SNCA. The cofactor is Ca(2+). In terms of processing, ubiquitinated. Deubiquitinated by CAND1 to prevent its degradation. As to expression, specifically expressed in brain.

It localises to the cytoplasmic vesicle. Its subcellular location is the secretory vesicle. The protein localises to the synaptic vesicle membrane. The protein resides in the cell projection. It is found in the dendritic spine. It localises to the postsynaptic cell membrane. Its subcellular location is the membrane. Its function is as follows. Plays an essential role in docking and fusion steps of regulated exocytosis. At the presynaptic level, RPH3A is recruited by RAB3A to the synaptic vesicle membrane in a GTP-dependent manner where it modulates synaptic vesicle trafficking and calcium-triggered neurotransmitter release. In the post-synaptic compartment, forms a ternary complex with GRIN2A and DLG4 and regulates NMDA receptor stability. Also plays a role in the exocytosis of arginine vasopressin hormone. In Mus musculus (Mouse), this protein is Rabphilin-3A (Rph3a).